The chain runs to 355 residues: F-box only protein 32 (355 aa).

The Nuclear localization signal motif lies at 62–67; that stretch reads KKRKKD. The short motif at 169–173 is the Nuclear export signal element; the sequence is LLQTL. Residues 223 to 271 form the F-box domain; sequence LTFTDLPLCLQLNIMQRLSDGRDLVSLGQAAPDLHVLSEDRLLWKKLCQ. Residues 280 to 295 carry the Bipartite nuclear localization signal motif; sequence RKRLILSDKGQLDWKK.

As to quaternary structure, part of the SCF (SKP1-CUL1-F-box) E3 ubiquitin-protein ligase complex SCF(FBXO32) formed of CUL1, SKP1, RBX1 and FBXO32. As to expression, specifically expressed in cardiac and skeletal muscle.

The protein localises to the cytoplasm. It localises to the nucleus. It participates in protein modification; protein ubiquitination. Its function is as follows. Substrate recognition component of a SCF (SKP1-CUL1-F-box protein) E3 ubiquitin-protein ligase complex which mediates the ubiquitination and subsequent proteasomal degradation of target proteins. Probably recognizes and binds to phosphorylated target proteins during skeletal muscle atrophy. Recognizes TERF1. This chain is F-box only protein 32 (FBXO32), found in Homo sapiens (Human).